The chain runs to 69 residues: Microcin H47 immunity protein MchI (69 aa).

Residues 1 to 6 (MSYKKL) lie on the Cytoplasmic side of the membrane. Residues 7–29 (YQLTAIFSLPLTILLVSLSSLRI) form a helical membrane-spanning segment. Topologically, residues 30-38 (VGEGNSYVD) are periplasmic. A helical membrane pass occupies residues 39–61 (VFLSFIIFLGFIELIHGIRKILV). The Cytoplasmic segment spans residues 62–69 (WSGWKNGS).

The protein localises to the cell membrane. In terms of biological role, protects a microcin H47-producer cell against microcin H47. The protein is Microcin H47 immunity protein MchI (mchI) of Escherichia coli.